The following is a 185-amino-acid chain: Nucleoside triphosphate pyrophosphatase (185 aa).

D70 functions as the Proton acceptor in the catalytic mechanism.

It belongs to the Maf family. Requires a divalent metal cation as cofactor.

It localises to the cytoplasm. It carries out the reaction a ribonucleoside 5'-triphosphate + H2O = a ribonucleoside 5'-phosphate + diphosphate + H(+). The enzyme catalyses a 2'-deoxyribonucleoside 5'-triphosphate + H2O = a 2'-deoxyribonucleoside 5'-phosphate + diphosphate + H(+). Nucleoside triphosphate pyrophosphatase. May have a dual role in cell division arrest and in preventing the incorporation of modified nucleotides into cellular nucleic acids. This Nitratiruptor sp. (strain SB155-2) protein is Nucleoside triphosphate pyrophosphatase.